An 828-amino-acid chain; its full sequence is Leucine--tRNA ligase (828 aa).

Residues 42–52 carry the 'HIGH' region motif; the sequence is PYPSGTLHVGH. Positions 582–586 match the 'KMSKS' region motif; that stretch reads KMSKS. An ATP-binding site is contributed by K585.

It belongs to the class-I aminoacyl-tRNA synthetase family.

The protein resides in the cytoplasm. It catalyses the reaction tRNA(Leu) + L-leucine + ATP = L-leucyl-tRNA(Leu) + AMP + diphosphate. The chain is Leucine--tRNA ligase from Petrotoga mobilis (strain DSM 10674 / SJ95).